A 147-amino-acid polypeptide reads, in one-letter code: Large ribosomal subunit protein uL16 (147 aa).

It belongs to the universal ribosomal protein uL16 family. As to quaternary structure, part of the 50S ribosomal subunit.

Its function is as follows. Binds 23S rRNA and is also seen to make contacts with the A and possibly P site tRNAs. The sequence is that of Large ribosomal subunit protein uL16 from Caldicellulosiruptor saccharolyticus (strain ATCC 43494 / DSM 8903 / Tp8T 6331).